Consider the following 515-residue polypeptide: MTKRVLISVSDKAGIVEFAQELKKLGWEIISTGGTKVALDNAGVDTIAIDDMTGFPEMMDGRVKTLHPNIHGGLLARRDLDSHLEAAKDNKIELIDLVVVNLYPFKETILKPDVTYADAVENIDIGGPSMLRSAAKNHASVTVVVDPADYAVVLDELSANGETTYETRQRLAAKVFRHTAAYDALIAEYFTAQVGESKPEKLTLTYDLKQAMRYGENPQQDADFYQKALPTDYSIASAKQLNGKELSFNNIRDADAAIRIIRDFKDRPTVVALKHMNPCGIGQADNIETAWDYAYESDPVSIFGGIVVLNREVDAATAEKMHGVFLEIIIAPSYTDEALAILINKKKNLRILALPFNAQEASEVEAEYTGVVGGLLVQNQDVVKESPADWQVVTKRQPTETEATALEFAWKAIKYVKSNGIIVTNDHMTLGVGPGQTNRVASVRLAIDQAKDRLNGAVLASDAFFPFADNVEEIAKAGIKAIIQPGGSVRDQESIEAADKYGLTMVFTGVRHFRH.

One can recognise an MGS-like domain in the interval 1 to 145; it reads MTKRVLISVS…KNHASVTVVV (145 aa).

Belongs to the PurH family.

It catalyses the reaction (6R)-10-formyltetrahydrofolate + 5-amino-1-(5-phospho-beta-D-ribosyl)imidazole-4-carboxamide = 5-formamido-1-(5-phospho-D-ribosyl)imidazole-4-carboxamide + (6S)-5,6,7,8-tetrahydrofolate. The enzyme catalyses IMP + H2O = 5-formamido-1-(5-phospho-D-ribosyl)imidazole-4-carboxamide. Its pathway is purine metabolism; IMP biosynthesis via de novo pathway; 5-formamido-1-(5-phospho-D-ribosyl)imidazole-4-carboxamide from 5-amino-1-(5-phospho-D-ribosyl)imidazole-4-carboxamide (10-formyl THF route): step 1/1. It functions in the pathway purine metabolism; IMP biosynthesis via de novo pathway; IMP from 5-formamido-1-(5-phospho-D-ribosyl)imidazole-4-carboxamide: step 1/1. This is Bifunctional purine biosynthesis protein PurH from Streptococcus pneumoniae serotype 19F (strain G54).